Consider the following 205-residue polypeptide: MVFLSWGRPSSEQQQQVINKTGTFNYDNKYRGVSSRSIAKLKEDSEIDKDGFLINHARVLVGSGRESYEKGKKALQNWKHFGMDWAFVDPATPVETGKKFCICVKEVLPWVMLPLQVVYVDESRKSRKGPAHFGYGSGTLQGHLLAGEEKFSIELDGNGEVWYEITSFSKPAHFLSFLGYPYVKLRQKHFARHSSEAVLKHVNAS.

The protein belongs to the UPF0548 family.

The polypeptide is UPF0548 protein At2g17695 (Arabidopsis thaliana (Mouse-ear cress)).